Consider the following 1368-residue polypeptide: DNA-directed RNA polymerase subunit beta (1368 aa).

It belongs to the RNA polymerase beta chain family. In terms of assembly, the RNAP catalytic core consists of 2 alpha, 1 beta, 1 beta' and 1 omega subunit. When a sigma factor is associated with the core the holoenzyme is formed, which can initiate transcription.

It carries out the reaction RNA(n) + a ribonucleoside 5'-triphosphate = RNA(n+1) + diphosphate. DNA-dependent RNA polymerase catalyzes the transcription of DNA into RNA using the four ribonucleoside triphosphates as substrates. In Legionella pneumophila (strain Paris), this protein is DNA-directed RNA polymerase subunit beta.